An 82-amino-acid chain; its full sequence is Small ribosomal subunit protein bS16 (82 aa).

The protein belongs to the bacterial ribosomal protein bS16 family.

This Actinobacillus succinogenes (strain ATCC 55618 / DSM 22257 / CCUG 43843 / 130Z) protein is Small ribosomal subunit protein bS16.